The chain runs to 192 residues: Secreted phosphoprotein 24 (192 aa).

The N-terminal stretch at 1-18 (MKWCVLMLALLQSLCCSG) is a signal peptide. Disulfide bonds link cysteine 82–cysteine 93 and cysteine 106–cysteine 124. Residues 124-192 (CGQDSSSSES…RGDSIGNHLE (69 aa)) are disordered. Positions 128-137 (SSSSESSSEE) are enriched in low complexity.

The protein belongs to the SPP2 family. Multiply phosphorylated at serine residues.

Its subcellular location is the secreted. Could coordinate an aspect of bone turnover. This Oncorhynchus mykiss (Rainbow trout) protein is Secreted phosphoprotein 24 (spp2).